Here is a 261-residue protein sequence, read N- to C-terminus: Transmembrane protein 187 (261 aa).

6 helical membrane-spanning segments follow: residues 8–28, 43–63, 88–108, 113–133, 140–162, and 190–210; these read AFVH…TGIF, APVA…VNMA, VFAA…WTQW, VLDQ…CLYL, WLFL…HPQG, and SATY…LKLC.

Ubiquitous.

Its subcellular location is the membrane. The protein is Transmembrane protein 187 (TMEM187) of Homo sapiens (Human).